Here is a 275-residue protein sequence, read N- to C-terminus: NH(3)-dependent NAD(+) synthetase (275 aa).

46–53 (GISGGQDS) is an ATP binding site. Residue aspartate 52 coordinates Mg(2+). Deamido-NAD(+) is bound at residue arginine 140. Threonine 160 provides a ligand contact to ATP. Glutamate 165 lines the Mg(2+) pocket. The deamido-NAD(+) site is built by lysine 173 and aspartate 180. Residues lysine 189 and threonine 211 each coordinate ATP. 260–261 (HK) is a binding site for deamido-NAD(+).

Belongs to the NAD synthetase family. In terms of assembly, homodimer.

The catalysed reaction is deamido-NAD(+) + NH4(+) + ATP = AMP + diphosphate + NAD(+) + H(+). Its pathway is cofactor biosynthesis; NAD(+) biosynthesis; NAD(+) from deamido-NAD(+) (ammonia route): step 1/1. Catalyzes the ATP-dependent amidation of deamido-NAD to form NAD. Uses ammonia as a nitrogen source. The sequence is that of NH(3)-dependent NAD(+) synthetase from Escherichia coli O8 (strain IAI1).